A 31-amino-acid chain; its full sequence is Cytochrome b6-f complex subunit 6 (31 aa).

Residues 3-23 (ILINYFLLVGFCFALASGLFL) form a helical membrane-spanning segment.

The protein belongs to the PetL family. In terms of assembly, the 4 large subunits of the cytochrome b6-f complex are cytochrome b6, subunit IV (17 kDa polypeptide, PetD), cytochrome f and the Rieske protein, while the 4 small subunits are PetG, PetL, PetM and PetN. The complex functions as a dimer.

The protein resides in the plastid. It localises to the chloroplast thylakoid membrane. In terms of biological role, component of the cytochrome b6-f complex, which mediates electron transfer between photosystem II (PSII) and photosystem I (PSI), cyclic electron flow around PSI, and state transitions. PetL is important for photoautotrophic growth as well as for electron transfer efficiency and stability of the cytochrome b6-f complex. This is Cytochrome b6-f complex subunit 6 from Thalassiosira pseudonana (Marine diatom).